An 898-amino-acid chain; its full sequence is Alanine--tRNA ligase (898 aa).

Zn(2+)-binding residues include His564, His568, Cys682, and His686.

Belongs to the class-II aminoacyl-tRNA synthetase family. Zn(2+) serves as cofactor.

The protein localises to the cytoplasm. The enzyme catalyses tRNA(Ala) + L-alanine + ATP = L-alanyl-tRNA(Ala) + AMP + diphosphate. Catalyzes the attachment of alanine to tRNA(Ala) in a two-step reaction: alanine is first activated by ATP to form Ala-AMP and then transferred to the acceptor end of tRNA(Ala). Also edits incorrectly charged Ser-tRNA(Ala) and Gly-tRNA(Ala) via its editing domain. The polypeptide is Alanine--tRNA ligase (Beijerinckia indica subsp. indica (strain ATCC 9039 / DSM 1715 / NCIMB 8712)).